The following is a 185-amino-acid chain: TATA-box-binding protein 3 (185 aa).

Repeat copies occupy residues 7-84 (IENV…ANTL) and 100-178 (VQNI…KTEF).

Belongs to the TBP family.

Functionally, general factor that plays a role in the activation of archaeal genes transcribed by RNA polymerase. Binds specifically to the TATA box promoter element which lies close to the position of transcription initiation. This Methanosarcina mazei (strain ATCC BAA-159 / DSM 3647 / Goe1 / Go1 / JCM 11833 / OCM 88) (Methanosarcina frisia) protein is TATA-box-binding protein 3.